Reading from the N-terminus, the 260-residue chain is Malonyl-[acyl-carrier protein] O-methyltransferase (260 aa).

The protein belongs to the methyltransferase superfamily.

It carries out the reaction malonyl-[ACP] + S-adenosyl-L-methionine = malonyl-[ACP] methyl ester + S-adenosyl-L-homocysteine. It participates in cofactor biosynthesis; biotin biosynthesis. Converts the free carboxyl group of a malonyl-thioester to its methyl ester by transfer of a methyl group from S-adenosyl-L-methionine (SAM). It allows to synthesize pimeloyl-ACP via the fatty acid synthetic pathway. This is Malonyl-[acyl-carrier protein] O-methyltransferase from Haemophilus influenzae (strain ATCC 51907 / DSM 11121 / KW20 / Rd).